The following is a 1752-amino-acid chain: Chitin synthase E (1752 aa).

ATP is bound at residue 1–8; sequence GESGSGKT. Residues 492 to 520 are disordered; the sequence is SSKPLRMPSMARRKTSPSSRLAFDAGDAD. An actin-binding region spans residues 558 to 582; sequence LDIVNKCLSSTNLNPYFIFCLKPND. 2 helical membrane-spanning segments follow: residues 789-809 and 828-848; these read WIAL…KLFG and LIIW…PGLV. The region spanning 852–940 is the Cytochrome b5 heme-binding domain; that stretch reads QHVYSAAELS…LLDYRPTNIS (89 aa). N-linked (GlcNAc...) asparagine glycosylation is found at Asn-938 and Asn-963. The chain crosses the membrane as a helical span at residues 1099 to 1119; it reads FILAISVLICSIIVFKFLAAL. Residues Asn-1322, Asn-1356, and Asn-1462 are each glycosylated (N-linked (GlcNAc...) asparagine). The next 3 helical transmembrane spans lie at 1494–1514, 1520–1540, and 1547–1567; these read LSTV…YWLV, IPYT…LIFI, and MVGW…PCPS. Residue Asn-1685 is glycosylated (N-linked (GlcNAc...) asparagine). The DEK-C domain occupies 1689-1744; the sequence is LPSDDAILAEIREILRTADLMSVTKKSIKLELERAFGVNLDLKRPYINSGKGYTFP.

This sequence in the N-terminal section; belongs to the TRAFAC class myosin-kinesin ATPase superfamily. Myosin family. It in the C-terminal section; belongs to the chitin synthase family. Class V subfamily.

The protein resides in the cell membrane. The protein localises to the cell septum. It localises to the cell tip. The catalysed reaction is [(1-&gt;4)-N-acetyl-beta-D-glucosaminyl](n) + UDP-N-acetyl-alpha-D-glucosamine = [(1-&gt;4)-N-acetyl-beta-D-glucosaminyl](n+1) + UDP + H(+). Functionally, polymerizes chitin, a structural polymer of the cell wall and septum, by transferring the sugar moiety of UDP-GlcNAc to the non-reducing end of the growing chitin polymer. Important for hyphal growth and conidiophore development but not pathogenicity. In Aspergillus fumigatus (Neosartorya fumigata), this protein is Chitin synthase E.